A 192-amino-acid chain; its full sequence is Fe/S biogenesis protein NfuA (192 aa).

[4Fe-4S] cluster is bound by residues Cys149 and Cys152.

The protein belongs to the NfuA family. In terms of assembly, homodimer. It depends on [4Fe-4S] cluster as a cofactor.

Functionally, involved in iron-sulfur cluster biogenesis. Binds a 4Fe-4S cluster, can transfer this cluster to apoproteins, and thereby intervenes in the maturation of Fe/S proteins. Could also act as a scaffold/chaperone for damaged Fe/S proteins. The sequence is that of Fe/S biogenesis protein NfuA from Shewanella oneidensis (strain ATCC 700550 / JCM 31522 / CIP 106686 / LMG 19005 / NCIMB 14063 / MR-1).